Consider the following 297-residue polypeptide: Large ribosomal subunit protein uL18 (297 aa).

Positions 258 to 267 (KKAHPKKRWT) are enriched in basic residues. Positions 258–277 (KKAHPKKRWTEKKLTREQRQ) are disordered. The segment covering 268-277 (EKKLTREQRQ) has biased composition (basic and acidic residues).

It belongs to the universal ribosomal protein uL18 family. As to quaternary structure, component of the large ribosomal subunit (LSU).

The protein localises to the cytoplasm. The protein resides in the nucleus. In terms of biological role, component of the ribosome, a large ribonucleoprotein complex responsible for the synthesis of proteins in the cell. The small ribosomal subunit (SSU) binds messenger RNAs (mRNAs) and translates the encoded message by selecting cognate aminoacyl-transfer RNA (tRNA) molecules. The large subunit (LSU) contains the ribosomal catalytic site termed the peptidyl transferase center (PTC), which catalyzes the formation of peptide bonds, thereby polymerizing the amino acids delivered by tRNAs into a polypeptide chain. The nascent polypeptides leave the ribosome through a tunnel in the LSU and interact with protein factors that function in enzymatic processing, targeting, and the membrane insertion of nascent chains at the exit of the ribosomal tunnel. The sequence is that of Large ribosomal subunit protein uL18 (RPL5A) from Helianthus annuus (Common sunflower).